A 91-amino-acid polypeptide reads, in one-letter code: Small ribosomal subunit protein bS18 (91 aa).

The disordered stretch occupies residues 1-21 (MSDERTPQRSSGPRKKRPFQR). Residues 12 to 21 (GPRKKRPFQR) are compositionally biased toward basic residues.

This sequence belongs to the bacterial ribosomal protein bS18 family. As to quaternary structure, part of the 30S ribosomal subunit. Forms a tight heterodimer with protein bS6.

Binds as a heterodimer with protein bS6 to the central domain of the 16S rRNA, where it helps stabilize the platform of the 30S subunit. The polypeptide is Small ribosomal subunit protein bS18 (Geotalea uraniireducens (strain Rf4) (Geobacter uraniireducens)).